The primary structure comprises 217 residues: uncharacterized protein (217 aa).

Positions 1–32 are disordered; it reads MTLKKHRGKMSEKSNVNKKFTNSTQNNSNWSN. The segment covering 22–32 has biased composition (low complexity); the sequence is NSTQNNSNWSN.

This is an uncharacterized protein from Acidianus filamentous virus 2 (isolate Italy/Pozzuoli) (AFV-2).